Here is a 318-residue protein sequence, read N- to C-terminus: Porphobilinogen deaminase (318 aa).

Cysteine 241 is modified (S-(dipyrrolylmethanemethyl)cysteine).

The protein belongs to the HMBS family. As to quaternary structure, monomer. Dipyrromethane serves as cofactor.

It catalyses the reaction 4 porphobilinogen + H2O = hydroxymethylbilane + 4 NH4(+). It participates in porphyrin-containing compound metabolism; protoporphyrin-IX biosynthesis; coproporphyrinogen-III from 5-aminolevulinate: step 2/4. In terms of biological role, tetrapolymerization of the monopyrrole PBG into the hydroxymethylbilane pre-uroporphyrinogen in several discrete steps. The protein is Porphobilinogen deaminase of Geobacter sulfurreducens (strain ATCC 51573 / DSM 12127 / PCA).